The sequence spans 91 residues: uncharacterized protein (91 aa).

Helical transmembrane passes span 9 to 29 (LIHAIGGIIFGYLANYVYTAG), 30 to 50 (LGIFSGIATLIFLFIGAVIFG), and 67 to 87 (WLGCGVLPFFLVAIVVWVLKF).

The protein resides in the cell membrane. This is an uncharacterized protein from Methanocaldococcus jannaschii (strain ATCC 43067 / DSM 2661 / JAL-1 / JCM 10045 / NBRC 100440) (Methanococcus jannaschii).